Reading from the N-terminus, the 270-residue chain is 4-hydroxy-4-methyl-2-oxoglutarate aldolase tasA (270 aa).

H49 (proton acceptor) is an active-site residue. A divalent metal cation is bound by residues E156 and D182. D182 is a binding site for substrate.

It belongs to the HpcH/HpaI aldolase family. Homohexamer; trimer of dimers. Co(2+) serves as cofactor. It depends on Mn(2+) as a cofactor. The cofactor is Zn(2+). Fe(2+) is required as a cofactor. Requires Mg(2+) as cofactor.

The enzyme catalyses 4-hydroxy-4-methyl-2-oxoglutarate = 2 pyruvate. The protein operates within secondary metabolite biosynthesis. Its function is as follows. 4-hydroxy-4-methyl-2-oxoglutarate aldolase; part of the gene cluster that mediates the biosynthesis of the tetramic acids Sch210971 and Sch210972, potential anti-HIV fungal natural product that contain a decalin core. The PKS module of tasS together with the enoylreductase tasC catalyze the formation of the polyketide unit which is then conjugated to 4-hydroxyl-4-methyl glutamate (HMG) by the condensation domain of the tasS NRPS module. One unique structural feature of Sch210971 and Sch210972 is the tetramic acid motif proposed to be derived from the non-proteinogenic amino acid HMG, by a Dieckmann-type condensation catalyzed by the reductase domain of tasS. The aldolase tasA catalyzes the aldol condensation of 2 molecules of pyruvic acid to yield the intermediate 4-hydroxyl-4-methyl-2-oxoglutarate (HMOG), which can then be stereoselectively transaminated, may be by tasG, to form HMG. The Diels-Alderase tas3 then uses the Dieckmann product of tasS as substrate and catalyzes the Diels-Alder cycloaddition to form the decalin ring of Sch210971 and Sch210972. This is 4-hydroxy-4-methyl-2-oxoglutarate aldolase tasA from Hapsidospora irregularis.